The sequence spans 250 residues: Uracil-DNA glycosylase (250 aa).

Residue D78 is the Proton acceptor of the active site. The segment at 228 to 250 is disordered; that stretch reads RGQKPVDWSGEQNNASRQGEFAL.

Belongs to the uracil-DNA glycosylase (UDG) superfamily. UNG family.

Its subcellular location is the cytoplasm. It catalyses the reaction Hydrolyzes single-stranded DNA or mismatched double-stranded DNA and polynucleotides, releasing free uracil.. Its function is as follows. Excises uracil residues from the DNA which can arise as a result of misincorporation of dUMP residues by DNA polymerase or due to deamination of cytosine. This is Uracil-DNA glycosylase from Bordetella pertussis (strain Tohama I / ATCC BAA-589 / NCTC 13251).